The chain runs to 420 residues: 3-isopropylmalate dehydratase large subunit (420 aa).

Residues C300, C361, and C364 each contribute to the [4Fe-4S] cluster site.

Belongs to the aconitase/IPM isomerase family. LeuC type 2 subfamily. In terms of assembly, heterodimer of LeuC and LeuD. Requires [4Fe-4S] cluster as cofactor.

The catalysed reaction is (2R,3S)-3-isopropylmalate = (2S)-2-isopropylmalate. It participates in amino-acid biosynthesis; L-leucine biosynthesis; L-leucine from 3-methyl-2-oxobutanoate: step 2/4. Functionally, catalyzes the isomerization between 2-isopropylmalate and 3-isopropylmalate, via the formation of 2-isopropylmaleate. This Endomicrobium trichonymphae protein is 3-isopropylmalate dehydratase large subunit.